A 455-amino-acid chain; its full sequence is ATP-dependent protease ATPase subunit HslU (455 aa).

Residues Val-23, 65 to 70, Asp-266, Glu-333, and Arg-405 each bind ATP; that span reads GVGKTE.

Belongs to the ClpX chaperone family. HslU subfamily. In terms of assembly, a double ring-shaped homohexamer of HslV is capped on each side by a ring-shaped HslU homohexamer. The assembly of the HslU/HslV complex is dependent on binding of ATP.

The protein resides in the cytoplasm. Functionally, ATPase subunit of a proteasome-like degradation complex; this subunit has chaperone activity. The binding of ATP and its subsequent hydrolysis by HslU are essential for unfolding of protein substrates subsequently hydrolyzed by HslV. HslU recognizes the N-terminal part of its protein substrates and unfolds these before they are guided to HslV for hydrolysis. The protein is ATP-dependent protease ATPase subunit HslU of Xanthomonas campestris pv. campestris (strain 8004).